We begin with the raw amino-acid sequence, 883 residues long: Alanine--tRNA ligase (883 aa).

Zn(2+) is bound by residues His570, His574, Cys672, and His676.

It belongs to the class-II aminoacyl-tRNA synthetase family. The cofactor is Zn(2+).

It is found in the cytoplasm. The catalysed reaction is tRNA(Ala) + L-alanine + ATP = L-alanyl-tRNA(Ala) + AMP + diphosphate. In terms of biological role, catalyzes the attachment of alanine to tRNA(Ala) in a two-step reaction: alanine is first activated by ATP to form Ala-AMP and then transferred to the acceptor end of tRNA(Ala). Also edits incorrectly charged Ser-tRNA(Ala) and Gly-tRNA(Ala) via its editing domain. The polypeptide is Alanine--tRNA ligase (Heliobacterium modesticaldum (strain ATCC 51547 / Ice1)).